The sequence spans 359 residues: Glycerol-3-phosphate dehydrogenase [NAD(P)+] (359 aa).

4 residues coordinate NADPH: Thr11, Trp12, Arg32, and Lys107. The sn-glycerol 3-phosphate site is built by Lys107 and Gly138. Ala142 lines the NADPH pocket. Residues Lys193, Asp246, Ser256, Arg257, and Asn258 each contribute to the sn-glycerol 3-phosphate site. Lys193 functions as the Proton acceptor in the catalytic mechanism. NADPH is bound at residue Arg257. 2 residues coordinate NADPH: Val281 and Glu283.

It belongs to the NAD-dependent glycerol-3-phosphate dehydrogenase family.

The protein resides in the cytoplasm. It carries out the reaction sn-glycerol 3-phosphate + NAD(+) = dihydroxyacetone phosphate + NADH + H(+). The catalysed reaction is sn-glycerol 3-phosphate + NADP(+) = dihydroxyacetone phosphate + NADPH + H(+). Its pathway is membrane lipid metabolism; glycerophospholipid metabolism. Functionally, catalyzes the reduction of the glycolytic intermediate dihydroxyacetone phosphate (DHAP) to sn-glycerol 3-phosphate (G3P), the key precursor for phospholipid synthesis. The protein is Glycerol-3-phosphate dehydrogenase [NAD(P)+] of Dehalococcoides mccartyi (strain ATCC BAA-2266 / KCTC 15142 / 195) (Dehalococcoides ethenogenes (strain 195)).